The following is a 454-amino-acid chain: Probable 1,4-beta-D-glucan cellobiohydrolase C (454 aa).

An N-terminal signal peptide occupies residues 1 to 19; the sequence is MKHLASSIALTLLLPAVQA. Residues 20-55 enclose the CBM1 domain; it reads QQTVWGQCGGQGWSGPTSCVAGAACSTLNPYYAQCI. 2 cysteine pairs are disulfide-bonded: cysteine 27–cysteine 44 and cysteine 38–cysteine 54. Thr-rich linker stretches follow at residues 59 to 94 and 95 to 454; these read TATS…PTVT and ASGN…NPSF. A disordered region spans residues 68-95; the sequence is TTAATTTSQTTTKPTTTGPTTSAPTVTA. Aspartate 184 is a catalytic residue. Cystine bridges form between cysteine 185–cysteine 244 and cysteine 376–cysteine 423. Aspartate 230 (proton donor) is an active-site residue. The active-site Nucleophile is aspartate 409. A glycan (N-linked (GlcNAc...) asparagine) is linked at asparagine 413.

It belongs to the glycosyl hydrolase 6 (cellulase B) family.

Its subcellular location is the secreted. It carries out the reaction Hydrolysis of (1-&gt;4)-beta-D-glucosidic linkages in cellulose and cellotetraose, releasing cellobiose from the non-reducing ends of the chains.. Its function is as follows. The biological conversion of cellulose to glucose generally requires three types of hydrolytic enzymes: (1) Endoglucanases which cut internal beta-1,4-glucosidic bonds; (2) Exocellobiohydrolases that cut the disaccharide cellobiose from the non-reducing end of the cellulose polymer chain; (3) Beta-1,4-glucosidases which hydrolyze the cellobiose and other short cello-oligosaccharides to glucose. This is Probable 1,4-beta-D-glucan cellobiohydrolase C (cbhC) from Aspergillus fumigatus (strain CBS 144.89 / FGSC A1163 / CEA10) (Neosartorya fumigata).